The following is a 534-amino-acid chain: Cytochrome c oxidase subunit 1 (534 aa).

A helical membrane pass occupies residues 16–36; it reads VLYFMLAIFSGMAGTAMSLII. Ca(2+) contacts are provided by E39, A42, and G44. The next 6 helical transmembrane spans lie at 57-77, 101-121, 147-167, 182-202, 235-255, and 267-287; these read VLVVGHAVLMIFFLVMPALIG, IAFWVLPMGLVCLVTSTLVES, AIFALHLTSISSLLGAINFIV, LPLFVWSIFITAFLLLLSLPV, LFYFFGHPEVYILIIPGFGII, and VFGEISMVYAMASIGLLGFLV. H62 provides a ligand contact to Fe(II)-heme a. H241 contacts Cu cation. The segment at residues 241-245 is a cross-link (1'-histidyl-3'-tyrosine (His-Tyr)); that stretch reads HPEVY. An O2-binding site is contributed by Y245. Residues H290 and H291 each coordinate Cu cation. 2 helical membrane-spanning segments follow: residues 310–330 and 338–358; these read MIIAIPTGIKIFSWLATIYGG and MLYAIAFLFLFTMGGLTGVAL. Mg(2+) contacts are provided by H368 and D369. 2 consecutive transmembrane segments (helical) span residues 372-392 and 414-434; these read YVVGHFHYVLSMGAIFSLFAG and FWLIFIGANVIFFPMHFLGIN. H376 lines the heme a3 pocket. H378 contacts Fe(II)-heme a. P441 is a binding site for Ca(2+). Residues 452-472 traverse the membrane as a helical segment; the sequence is YVASIGSFIATLSLFLFIYIL.

Belongs to the heme-copper respiratory oxidase family. As to quaternary structure, component of the cytochrome c oxidase (complex IV, CIV), a multisubunit enzyme composed of a catalytic core of 3 subunits and several supernumerary subunits. The complex exists as a monomer or a dimer and forms supercomplexes (SCs) in the inner mitochondrial membrane with ubiquinol-cytochrome c oxidoreductase (cytochrome b-c1 complex, complex III, CIII). Heme is required as a cofactor. Requires Cu cation as cofactor.

The protein resides in the mitochondrion inner membrane. The enzyme catalyses 4 Fe(II)-[cytochrome c] + O2 + 8 H(+)(in) = 4 Fe(III)-[cytochrome c] + 2 H2O + 4 H(+)(out). Its pathway is energy metabolism; oxidative phosphorylation. Functionally, component of the cytochrome c oxidase, the last enzyme in the mitochondrial electron transport chain which drives oxidative phosphorylation. The respiratory chain contains 3 multisubunit complexes succinate dehydrogenase (complex II, CII), ubiquinol-cytochrome c oxidoreductase (cytochrome b-c1 complex, complex III, CIII) and cytochrome c oxidase (complex IV, CIV), that cooperate to transfer electrons derived from NADH and succinate to molecular oxygen, creating an electrochemical gradient over the inner membrane that drives transmembrane transport and the ATP synthase. Cytochrome c oxidase is the component of the respiratory chain that catalyzes the reduction of oxygen to water. Electrons originating from reduced cytochrome c in the intermembrane space (IMS) are transferred via the dinuclear copper A center (CU(A)) of subunit 2 and heme A of subunit 1 to the active site in subunit 1, a binuclear center (BNC) formed by heme A3 and copper B (CU(B)). The BNC reduces molecular oxygen to 2 water molecules using 4 electrons from cytochrome c in the IMS and 4 protons from the mitochondrial matrix. The chain is Cytochrome c oxidase subunit 1 (COXI) from Saccharomyces paradoxus (Yeast).